The primary structure comprises 397 residues: Tryptophan synthase beta chain (397 aa).

Lys87 bears the N6-(pyridoxal phosphate)lysine mark.

The protein belongs to the TrpB family. Tetramer of two alpha and two beta chains. Requires pyridoxal 5'-phosphate as cofactor.

The catalysed reaction is (1S,2R)-1-C-(indol-3-yl)glycerol 3-phosphate + L-serine = D-glyceraldehyde 3-phosphate + L-tryptophan + H2O. The protein operates within amino-acid biosynthesis; L-tryptophan biosynthesis; L-tryptophan from chorismate: step 5/5. In terms of biological role, the beta subunit is responsible for the synthesis of L-tryptophan from indole and L-serine. In Cronobacter sakazakii (strain ATCC BAA-894) (Enterobacter sakazakii), this protein is Tryptophan synthase beta chain.